A 735-amino-acid chain; its full sequence is Ethylene receptor 1 (735 aa).

Transmembrane regions (helical) follow at residues 23–43 (ISDF…IYFV), 54–74 (VLVQ…INLW), and 92–112 (VLTA…IPDL). Cu cation is bound by residues Cys65 and His69. Residues 158–307 (DRHTILKTTL…VVADQVAVAL (150 aa)) enclose the GAF domain. The region spanning 350-586 (VMNHEMRTPM…IFDVKLAISN (237 aa)) is the Histidine kinase domain. The residue at position 353 (His353) is a Phosphohistidine; by autocatalysis. Residues 609–726 (KVLVMDENGV…NMRNVLSDRL (118 aa)) enclose the Response regulatory domain. Asp657 carries the post-translational modification 4-aspartylphosphate. Lys711 participates in a covalent cross-link: Glycyl lysine isopeptide (Lys-Gly) (interchain with G-Cter in ubiquitin).

It belongs to the ethylene receptor family. As to quaternary structure, homodimer; disulfide-linked. Cu cation serves as cofactor. Activation probably requires a transfer of a phosphate group between a His in the transmitter domain and an Asp of the receiver domain.

The protein resides in the endoplasmic reticulum membrane. It carries out the reaction ATP + protein L-histidine = ADP + protein N-phospho-L-histidine.. Its function is as follows. May act early in the ethylene signal transduction pathway, possibly as an ethylene receptor, or as a regulator of the pathway. The chain is Ethylene receptor 1 (ETR1) from Brassica oleracea (Wild cabbage).